Consider the following 334-residue polypeptide: MFRWERSIPLRGSAAALCNNLSVLQLPARNLTYFGVVHGPSAQLLSAAPEGVPLAQRQLHAKEGAGVSPPLITQVHWCVLPFRVLLVLTSHRGIQMYESNGYTMVYWHALDSGDASPVQAVFARGIAASGHFICVGTWSGRVLVFDIPAKGPNIVLSEELAGHQMPITDIATEPAQGQDCVADMVTADDSGLLCVWRSGPEFTLLTRIPGFGVPCPSVQLWQGIIAAGYGNGQVHLYEATTGNLHVQINAHARAICALDLASEVGKLLSAGEDTFVHIWKLSRNPESGYIEVEHCHGECVADTQLCGARFCDSSGNSFAVTGYDLAEIRRFSSV.

WD repeat units follow at residues 162-206 (GHQM…TLLT), 208-247 (IPGF…LHVQ), and 250-289 (AHAR…ESGY).

As to quaternary structure, homodimer and homotrimer; forms tight forms of dimers and trimers. Interacts with IZUMO1 and IZUMO1R/JUNO. In terms of processing, cross-linked to tightly form both dimers and trimers by TGM2. Cross-linking enhances the activation of EGF receptor-mediated signaling pathway. Cross-linking is inhibited by EGF. Ubiquitinated. EGF increases ubiquitination. As to expression, expressed in epithelial cells (at protein level). Isoform 3 expression is highly increased in colorectal cancer cells.

It is found in the vesicle. Its subcellular location is the cytoplasm. The protein resides in the cell membrane. Plays a role in the adhesion and fusion of the sperm-oocyte membrane through its interactions with IZUMO1 and IZUMO1R/JUNO. When cross-linked to form dimers and trimers, it has a regulatory effect on ERK signaling pathway activity in response to EGF stimulation. Colocalizes with the EGF receptor in WDR54-specific vesicle where it sustains the internalization and controls the degradation of the EGF receptor after EGF stimulation. This chain is WD repeat-containing protein 54, found in Homo sapiens (Human).